A 103-amino-acid chain; its full sequence is Large ribosomal subunit protein bL21 (103 aa).

This sequence belongs to the bacterial ribosomal protein bL21 family. Part of the 50S ribosomal subunit. Contacts protein L20.

This protein binds to 23S rRNA in the presence of protein L20. This is Large ribosomal subunit protein bL21 from Burkholderia mallei (strain NCTC 10247).